Consider the following 292-residue polypeptide: uncharacterized protein (292 aa).

Residues leucine 17, aspartate 55, asparagine 82, and lysine 115 each contribute to the NADP(+) site. The active-site Proton donor is the serine 134. NADP(+)-binding residues include tyrosine 148, lysine 152, and threonine 184. Catalysis depends on tyrosine 148, which acts as the Proton acceptor. Lysine 152 (lowers pKa of active site Tyr) is an active-site residue.

This sequence belongs to the short-chain dehydrogenases/reductases (SDR) family.

The protein localises to the cytoplasm. This is an uncharacterized protein from Schizosaccharomyces pombe (strain 972 / ATCC 24843) (Fission yeast).